A 253-amino-acid polypeptide reads, in one-letter code: Glutamate racemase (253 aa).

Substrate is bound by residues 7-8 (DS) and 39-40 (YG). Residue Cys70 is the Proton donor/acceptor of the active site. 71–72 (NT) provides a ligand contact to substrate. The active-site Proton donor/acceptor is Cys180. 181 to 182 (TH) contributes to the substrate binding site.

The protein belongs to the aspartate/glutamate racemases family.

It catalyses the reaction L-glutamate = D-glutamate. The protein operates within cell wall biogenesis; peptidoglycan biosynthesis. Its function is as follows. Provides the (R)-glutamate required for cell wall biosynthesis. This is Glutamate racemase from Halothermothrix orenii (strain H 168 / OCM 544 / DSM 9562).